The following is a 318-amino-acid chain: Type II methyltransferase M.HaeII (318 aa).

The region spanning Y4 to A304 is the SAM-dependent MTase C5-type domain. C73 is a catalytic residue.

It belongs to the class I-like SAM-binding methyltransferase superfamily. C5-methyltransferase family.

It carries out the reaction a 2'-deoxycytidine in DNA + S-adenosyl-L-methionine = a 5-methyl-2'-deoxycytidine in DNA + S-adenosyl-L-homocysteine + H(+). A methylase, recognizes the double-stranded sequence 5'-RGCGCY-3', methylates C-? on both strands, and protects the DNA from cleavage by the HaeII endonuclease. The polypeptide is Type II methyltransferase M.HaeII (haeIIM) (Haemophilus aegyptius).